Consider the following 478-residue polypeptide: uncharacterized protein (478 aa).

In terms of domain architecture, ATP-grasp spans 174 to 366; the sequence is RQVLAAAGVP…LIGEHIKLAI (193 aa). 214–219 contributes to the ATP binding site; the sequence is GSGSRG. The active site involves Arg-339.

This is an uncharacterized protein from Sinorhizobium fredii (strain NBRC 101917 / NGR234).